The primary structure comprises 316 residues: MTVQPTTIGIVGARGHTGAELIKLIAAHPQLQLVFVSSRELAGQRVAEHSDGYEGELRYESLDADAVAAKAADVVILALPNGKAEPFVAAIDANRPQTLLIDLSADYRFDPAWYYGLPELTRHTYAGQRRISNPGCYATAMQLAITPLREQLAGPPQCFGVSGYSGAGTTPSDKNNPALLADNLMPYALTNHMHEREVSAQLGVPVEFMPHVAPHFRGITMTVNLWLQQPLTREQIHARYLERYAHEPLIEIVDEAPWVSRIAGTQGVQIGGFTMAPGNKRVVVVATLDNLLKGAATQAMQNLNLALGWDELTAIG.

C136 is a catalytic residue.

The protein belongs to the NAGSA dehydrogenase family. Type 1 subfamily.

It localises to the cytoplasm. It carries out the reaction N-acetyl-L-glutamate 5-semialdehyde + phosphate + NADP(+) = N-acetyl-L-glutamyl 5-phosphate + NADPH + H(+). Its pathway is amino-acid biosynthesis; L-arginine biosynthesis; N(2)-acetyl-L-ornithine from L-glutamate: step 3/4. Catalyzes the NADPH-dependent reduction of N-acetyl-5-glutamyl phosphate to yield N-acetyl-L-glutamate 5-semialdehyde. The chain is N-acetyl-gamma-glutamyl-phosphate reductase from Xanthomonas campestris pv. campestris (strain 8004).